We begin with the raw amino-acid sequence, 386 residues long: Galactokinase (386 aa).

Glu-35 to Asp-38 is a binding site for substrate. ATP is bound by residues Ser-69 and Gly-125–Ser-131. Ser-131 and Glu-163 together coordinate Mg(2+). Residue Asp-175 is the Proton acceptor of the active site. Tyr-224 serves as a coordination point for substrate.

This sequence belongs to the GHMP kinase family. GalK subfamily.

It localises to the cytoplasm. The enzyme catalyses alpha-D-galactose + ATP = alpha-D-galactose 1-phosphate + ADP + H(+). The protein operates within carbohydrate metabolism; galactose metabolism. Its function is as follows. Catalyzes the transfer of the gamma-phosphate of ATP to D-galactose to form alpha-D-galactose-1-phosphate (Gal-1-P). In Vibrio vulnificus (strain YJ016), this protein is Galactokinase.